The sequence spans 165 residues: Lipoprotein signal peptidase (165 aa).

3 helical membrane-spanning segments follow: residues 9–29 (PFLW…LAVV), 65–85 (WQKY…LFFL), and 97–119 (TGYA…HGFV). Residues Asp-121 and Asp-139 contribute to the active site. A helical transmembrane segment spans residues 134 to 154 (VFNIADVAICIGAGLLAIDAF).

Belongs to the peptidase A8 family.

Its subcellular location is the cell inner membrane. The enzyme catalyses Release of signal peptides from bacterial membrane prolipoproteins. Hydrolyzes -Xaa-Yaa-Zaa-|-(S,diacylglyceryl)Cys-, in which Xaa is hydrophobic (preferably Leu), and Yaa (Ala or Ser) and Zaa (Gly or Ala) have small, neutral side chains.. It functions in the pathway protein modification; lipoprotein biosynthesis (signal peptide cleavage). Its function is as follows. This protein specifically catalyzes the removal of signal peptides from prolipoproteins. The polypeptide is Lipoprotein signal peptidase (Histophilus somni (strain 129Pt) (Haemophilus somnus)).